Consider the following 99-residue polypeptide: Large ribosomal subunit protein bL28 (99 aa).

Residues 1 to 25 (MSRKCAVTGKGVQTGNNVSHANNKS) are disordered. Over residues 11-22 (GVQTGNNVSHAN) the composition is skewed to polar residues.

Belongs to the bacterial ribosomal protein bL28 family.

This is Large ribosomal subunit protein bL28 from Rhodospirillum centenum (strain ATCC 51521 / SW).